We begin with the raw amino-acid sequence, 365 residues long: tRNA-specific 2-thiouridylase MnmA (365 aa).

ATP contacts are provided by residues 9-16 (GLSGGVDS) and M35. The tract at residues 95–97 (NPD) is interaction with target base in tRNA. The active-site Nucleophile is the C100. C100 and C196 form a disulfide bridge. Residue G124 participates in ATP binding. An interaction with tRNA region spans residues 146-148 (KDQ). Residue C196 is the Cysteine persulfide intermediate of the active site. The segment at 315 to 316 (RY) is interaction with tRNA.

It belongs to the MnmA/TRMU family.

It localises to the cytoplasm. It catalyses the reaction S-sulfanyl-L-cysteinyl-[protein] + uridine(34) in tRNA + AH2 + ATP = 2-thiouridine(34) in tRNA + L-cysteinyl-[protein] + A + AMP + diphosphate + H(+). Its function is as follows. Catalyzes the 2-thiolation of uridine at the wobble position (U34) of tRNA, leading to the formation of s(2)U34. The polypeptide is tRNA-specific 2-thiouridylase MnmA (Dechloromonas aromatica (strain RCB)).